Here is a 387-residue protein sequence, read N- to C-terminus: 8-amino-7-oxononanoate synthase (387 aa).

Residue Arg-19 participates in substrate binding. 106 to 107 (GY) provides a ligand contact to pyridoxal 5'-phosphate. Position 131 (His-131) interacts with substrate. Positions 177, 205, and 236 each coordinate pyridoxal 5'-phosphate. At Lys-239 the chain carries N6-(pyridoxal phosphate)lysine. Thr-353 contacts substrate.

This sequence belongs to the class-II pyridoxal-phosphate-dependent aminotransferase family. BioF subfamily. As to quaternary structure, homodimer. Requires pyridoxal 5'-phosphate as cofactor.

The catalysed reaction is 6-carboxyhexanoyl-[ACP] + L-alanine + H(+) = (8S)-8-amino-7-oxononanoate + holo-[ACP] + CO2. It functions in the pathway cofactor biosynthesis; biotin biosynthesis. Catalyzes the decarboxylative condensation of pimeloyl-[acyl-carrier protein] and L-alanine to produce 8-amino-7-oxononanoate (AON), [acyl-carrier protein], and carbon dioxide. The polypeptide is 8-amino-7-oxononanoate synthase (Nitrosomonas eutropha (strain DSM 101675 / C91 / Nm57)).